Here is a 2506-residue protein sequence, read N- to C-terminus: Highly reducing polyketide synthase rstn3 (2506 aa).

The Ketosynthase family 3 (KS3) domain maps to 8-436; the sequence is VEPIAIVGMA…GANAHAILDA (429 aa). Active-site for beta-ketoacyl synthase activity residues include Cys183, His318, and His358. One can recognise a Malonyl-CoA:ACP transacylase (MAT) domain in the interval 547–875; it reads FIFTGQGAQW…KMVGSLFLSG (329 aa). The segment at 941-1050 is N-terminal hotdog fold; the sequence is HDLLGSRLPG…ASDQSISSVE (110 aa). One can recognise a PKS/mFAS DH domain in the interval 941 to 1212; the sequence is HDLLGSRLPG…FSSLETAVGE (272 aa). His973 functions as the Proton acceptor; for dehydratase activity in the catalytic mechanism. Residues 1060–1212 form a C-terminal hotdog fold region; sequence NKDSYDRRWY…FSSLETAVGE (153 aa). Catalysis depends on Asp1125, which acts as the Proton donor; for dehydratase activity. A methyltransferase (CMet) domain region spans residues 1263 to 1563; it reads VTRLAIRSSA…SGADIVLDDY (301 aa). The Enoyl reductase (ER) domain maps to 1827–2093; sequence GRVDSFYFKE…QDDYVGRVVL (267 aa). Residues 2116-2296 form the Ketoreductase (KR) domain; that stretch reads ASYLLIGCLG…QATSIALGMI (181 aa). Residues 2423–2501 enclose the Carrier domain; it reads AVKVTTLGLI…DLAEKVVALA (79 aa). Residue Ser2460 is modified to O-(pantetheine 4'-phosphoryl)serine.

Pantetheine 4'-phosphate serves as cofactor.

It functions in the pathway antifungal biosynthesis. In terms of biological role, highly reducing polyketide synthase; part of the gene cluster that mediates the biosynthesis of the tetrahydropyranyl antifungal agent restricticin that acts as an inhibitor of CYP51 and blocks the ergosterol biosynthesis. The highly reducing polyketide synthase rstn3, the short chain dehydrogenase rstn4, the cyclase rstn5, the FAD-dependent monooxygenase rstn6 and the enoylreductase rstn7 are required to generate the first stable intermediate desmethylrestrictinol. Rstn3 with rstn7 biosynthesize the first polyketide chain intermediate that is reduced by rstn4, followed by epoxidation by rstn6 before 6-endo cyclization via epoxide opening by rstn5 leads to desmethylrestrictinol. The methyltransferase rstn1 then catalyzes the C4 O-methylation of desmethylrestrictinol to produce restrictinol, and the nonribosomal peptide synthetase rstn8 catalyzes the C3 esterification of restrictinol with glycine that leads to restricticin. This Aspergillus nomiae NRRL (strain ATCC 15546 / NRRL 13137 / CBS 260.88 / M93) protein is Highly reducing polyketide synthase rstn3.